The following is a 215-amino-acid chain: 3-isopropylmalate dehydratase small subunit (215 aa).

The protein belongs to the LeuD family. LeuD type 1 subfamily. As to quaternary structure, heterodimer of LeuC and LeuD.

It catalyses the reaction (2R,3S)-3-isopropylmalate = (2S)-2-isopropylmalate. The protein operates within amino-acid biosynthesis; L-leucine biosynthesis; L-leucine from 3-methyl-2-oxobutanoate: step 2/4. In terms of biological role, catalyzes the isomerization between 2-isopropylmalate and 3-isopropylmalate, via the formation of 2-isopropylmaleate. The sequence is that of 3-isopropylmalate dehydratase small subunit from Ectopseudomonas mendocina (strain ymp) (Pseudomonas mendocina).